Consider the following 2833-residue polypeptide: MKRGICLAALLCLFNYLGAGHGENAEEDIRNSEGKVNFFSLDSNLKKNKKSKHNRVKRRNAKISNFLSQKAYVKETDNASGKDAEGSRPSHDSSFVNLNGHVDGKSLSYSVHVKESTPHSTTRESTEKGKENEKIQGVLSSFVQSQEGGESDDLEGMYNSIVDMSEKLKENDKYNLVFDMEIDFVDLQFFNLILELIPKDSQYHTYYEETLKQQVTEYTNSLKTLMDSCISEKDQMIILEYEINYAKRKSIETETLGDKETKLSAVSQAYAKHLESYKGVLKPKLNDIKNNAFSVLKDSYCKDNCGEYVQKYNTMRKNFISSSDQYKMEAYVYIPKSINDYTVLDKILSESNELGIDIQETVNSLKLLGEEISEVSHLYVINSTLIDDAAKKLESINEEDESAEIDLQKFEDNSKALANNYCIFQYIKTLNEPIKKAYESKVIKSNELLSTIIDTLGKSATALQESTFDQEECNKIKTEAEKVKDDAEDICEKNEQIYYEIPESEDETIDDKINDLQDLIDQMKEYKDEIVNNSEFISNRYKNIYENLKETYETELNDIGKLENDTSKVNFYLMQIRKINTEKTKIDESLQTVEKFYKEILDSKEKIYELKIEFEKSVTEINRLQDGESARDLHEEQIKEILDKMAKKVHYLKELLSLKGKSSVYFTEMNELLNTASYDNMEGFSAKKEKADNDINALYNSVYREDINALIEEVEKFVTENKESTLEMLKDEEMEEKLQDAKETFAKLNFVSDDKLTDVYTKMSAEVTNAEGIKKEIAQKQFENVHKKMKEFSDAFSTKFEALQNSMQQYNQEGDAIEKHKQNRSEKEEEYFKNESVEEDLSREETEEQEYTKHKNNFSRRKGEISAEITNMREVINKIESQLNYYGVIEKYFSLIGDQNEVSTAKALKEKIVSDSLRDKIDQYETEFKEKTSAVENTVSTIQSLSKAIDSLKRLNGSINNCKKYNTDIDLLRSKIKTLREEVQKEIAETEGDKVVGENTTALLLKSLRDKMGKINEKLNDGRLNSLDTKKEDLLKFYSESKSKIHLSKDQKGPQDPLNRIDEWEDIKREVDELNVNYQVISENKVTLFKNNSVTYIEAMHSHINTVAHGITSNKNEILKSVKEVEDKLNLVEQNEDYKKVKNPENEKQLEAIRGSMSKLKEVINKHVSEMTQLESTANTLKSNAKGKENEHDLEELNKTKGQMRDIYEKLKKIAEELKEGTVNELKDANEKANKVELEFERNIIGHVLERITVEKDKAGKVVEEMNSLKTKIEKLIQETSDDSQNELVTTSITKHLENAKGYEDVIKRNEEDSIQLREKAKSLETLDEMKKLVQQVNMNLQSAIQGNAGISKELNELKGVIELLISTNYSSILEYVKKNSSESVRFSQLANGEFTKAEGEEKNASARLAEAEKLKEQIVKDLDYSDIDDKVKKIEGIKREILKMKESALTFWEESEKFKQMCSSHMENAKEGKKKIEYLKNNGDGGKANITDSQMEEVGNYVSKAEHAFHTVEAQVDKTKAFYESIVAYVTKMDNLFNESLMKEVKVKCEKKNDEAEQIFGQIKTVDGRIKARVSENERKISELKEKAKVEKKESSQLNDVSTKSLLQIDNCRQQLDSVLSNIGRVKQNALQYFDSADKSMKSVLPISELGAEKSLDKVKAAKESYEKNLETVQNEMSRINVEEGSLTDIDKKITDIENDLLKMKKQYEEGLLQKIKENADKRKSNFELVGSEINALLDPSTSIFIKLKLKEYDMTGDLKNYAVKMNEIHGEFTKSYNLIETHLSNATDYSVTFEKAQSLRELAEKEEEHLRRREEEAIKLLNDIKKVESLKLLKEMMKKVSAEYEGMKRDHTSVSQLVQDMKTIVDELKTLNDISECSSVLNNVVSIVKKVKESKHADYKRDANSMYESMVTLANYFLSDEAKISSGMEFNAEMKSNFKTDLELEIFSVISNSNELLKKIEQDSNDVIQKERESEQLAKDATDIYNVIKLKNEFNEKLEEAKNKEEVVSEKVREALKRLSQVEGIRCHFENFHRLLDNTEELENLKKMVTIYRDKKSEAPKESGLQEMENEMNTYSNSITQLEGIVVSAGESKEDIEKLERSNEEMRNISEKISTIDSKVIEMNSTIDELYKLGKNCQAHWISLISYTANMKTSKKLIMINKEKENTEKCVDYIKDNSSSTDGYVETLKGFYGSKLTFSSASEIVQNADTYSVNFAKHEKESLNAIRDIKKELYLFHQNSDISIVEGGVQNMLALYDKLNEEKREMDELYRNISETKLKQMEHSTDVFKPMIELHKGMNETNNKSLLEKEKKLKSVNDHMHSMEAEMIKNGLKYTPESVQNINNIYSVIEAEVKTLEEIDRDYGDNYQIVEEHKKQFSILIDRTNALMDDIEIFKKENNYNLMEVNTETIHRVNDYIEKITNKLVQAKTEYEQILENIKQNDDMLQNIFLKKVSIIEYFENVKKKKESILNDLYEQERLLKIGEHLDEIKRNVTETLSSYEIDQKMEMMSKNLLEKKSKMMNYTSIYELEREANEINRDAKQIKDDDTILNSVLEAAIQKRGDMDAIFSQMSADRNPNEYKSAEKYMNEANEIIRQLEVKLREIGQLVQDSESILSEMNSKKSAIEKEKTARALRTSENNRREEEERARVQEMSMNNDPTQSETTHSEGSIGEGKESDSDETGLTHDAGADEDSTSSAKGAHELEEEETTAPMEETEMNDNTLLGYDTTRSDEPDMHTENTQDGTYQDTSNSSDEADILNGKFNFNNVKYAGAFVLLCTSAVIGAIIAHKKDDQEELNNGVEDDKVFEVKKSMHPENKEEIIDDSFVDIEY.

Positions 1-22 (MKRGICLAALLCLFNYLGAGHG) are cleaved as a signal peptide. Residues 75–91 (ETDNASGKDAEGSRPSH) show a composition bias toward basic and acidic residues. Disordered stretches follow at residues 75-95 (ETDNASGKDAEGSRPSHDSSF), 112-133 (HVKESTPHSTTRESTEKGKENE), and 819-860 (KHKQ…NFSR). Positions 819–836 (KHKQNRSEKEEEYFKNES) are enriched in basic and acidic residues. Over residues 837 to 849 (VEEDLSREETEEQ) the composition is skewed to acidic residues. The short motif at 2563-2565 (RGD) is the Cell attachment site element. Residues 2619–2755 (EMNSKKSAIE…GTYQDTSNSS (137 aa)) form a disordered region. Basic and acidic residues-rich tracts occupy residues 2621–2633 (NSKKSAIEKEKTA) and 2640–2652 (ENNRREEEERARV). The segment covering 2655–2670 (MSMNNDPTQSETTHSE) has biased composition (polar residues). The span at 2706–2720 (LEEEETTAPMEETEM) shows a compositional bias: acidic residues. Basic and acidic residues predominate over residues 2731 to 2742 (TRSDEPDMHTEN). The segment covering 2743–2755 (TQDGTYQDTSNSS) has biased composition (polar residues).

As to quaternary structure, homodimer.

Its subcellular location is the membrane. In terms of biological role, involved in reticulocyte adhesion. Specifically binds to human reticulocyte cells. The sequence is that of Reticulocyte-binding protein 1 (RBP1) from Plasmodium vivax (strain Belem).